The following is a 604-amino-acid chain: Rhotekin-2 (604 aa).

Positions Met-1–Asn-74 constitute an REM-1 domain. Residues Val-53 to Arg-79 are a coiled coil. The region spanning Ala-281–Phe-387 is the PH domain. The segment at Leu-481 to Ile-590 is disordered. A compositionally biased stretch (polar residues) spans Gly-514–Gly-527. Residues Ser-529–Pro-543 show a composition bias toward low complexity.

May play an important role in lymphopoiesis. This Mus musculus (Mouse) protein is Rhotekin-2 (Rtkn2).